A 334-amino-acid chain; its full sequence is MKKIRKLTEADVTAESAFFMQRRQVLKALGISAAALSLPNAAHADLLSWFKGNDRPPAPAGKPLEFSKPTAWQNNLPLTPEDKVSGYNNFYEFGLDKADPAANAGSLKTDPWTLKISGEVAKPLTLDHDALTRRFPLEERIYRMRCVEAWSMVVPWIGFPLNKLLALAEPTSNAKYVAFETIYAPEQMPGQQDRFIGGGLKYPYVEGLRLDEAMHPLTLLTVGVYGKALPPQNGAPVRLIVPWKYGFKGIKSIVSIKLTRERPPTTWNLAAPDEYGFYANVNPHVDHPRWSQATERFIGAGGILDVQRQPTLLFNGYADQVASLYRGLDLRENF.

The tat-type signal signal peptide spans 1 to 44 (MKKIRKLTEADVTAESAFFMQRRQVLKALGISAAALSLPNAAHA). Mo-molybdopterin is bound by residues N88, 91–92 (YE), C146, T181, N233, R238, and 249–251 (GIK).

The protein belongs to the MsrP family. Heterodimer of a catalytic subunit (MsrP) and a heme-binding subunit (MsrQ). Mo-molybdopterin serves as cofactor. In terms of processing, predicted to be exported by the Tat system. The position of the signal peptide cleavage has not been experimentally proven.

The protein localises to the periplasm. The enzyme catalyses L-methionyl-[protein] + a quinone + H2O = L-methionyl-(S)-S-oxide-[protein] + a quinol. It carries out the reaction L-methionyl-[protein] + a quinone + H2O = L-methionyl-(R)-S-oxide-[protein] + a quinol. Its function is as follows. Part of the MsrPQ system that repairs oxidized periplasmic proteins containing methionine sulfoxide residues (Met-O), using respiratory chain electrons. Thus protects these proteins from oxidative-stress damage caused by reactive species of oxygen and chlorine generated by the host defense mechanisms. MsrPQ is essential for the maintenance of envelope integrity under bleach stress, rescuing a wide series of structurally unrelated periplasmic proteins from methionine oxidation, including the primary periplasmic chaperone SurA and the lipoprotein Pal. The catalytic subunit MsrP is non-stereospecific, being able to reduce both (R-) and (S-) diastereoisomers of methionine sulfoxide. The chain is Protein-methionine-sulfoxide reductase catalytic subunit MsrP from Escherichia fergusonii (strain ATCC 35469 / DSM 13698 / CCUG 18766 / IAM 14443 / JCM 21226 / LMG 7866 / NBRC 102419 / NCTC 12128 / CDC 0568-73).